We begin with the raw amino-acid sequence, 220 residues long: Small ribosomal subunit protein uS3c (220 aa).

Positions 43–120 (IQHYVEKNTR…RLNIAIIRVA (78 aa)) constitute a KH type-2 domain.

It belongs to the universal ribosomal protein uS3 family. As to quaternary structure, part of the 30S ribosomal subunit.

Its subcellular location is the plastid. It is found in the chloroplast. The sequence is that of Small ribosomal subunit protein uS3c (rps3) from Piper cenocladum (Ant piper).